The primary structure comprises 347 residues: tRNA dimethylallyltransferase (347 aa).

An ATP-binding site is contributed by 20-27 (GPTASGKT). 22-27 (TASGKT) serves as a coordination point for substrate. 3 interaction with substrate tRNA regions span residues 45-48 (DSAM), 169-173 (QRLMR), and 275-280 (RCVGYR).

The protein belongs to the IPP transferase family. Monomer. Mg(2+) is required as a cofactor.

It catalyses the reaction adenosine(37) in tRNA + dimethylallyl diphosphate = N(6)-dimethylallyladenosine(37) in tRNA + diphosphate. Catalyzes the transfer of a dimethylallyl group onto the adenine at position 37 in tRNAs that read codons beginning with uridine, leading to the formation of N6-(dimethylallyl)adenosine (i(6)A). This Marinobacter nauticus (strain ATCC 700491 / DSM 11845 / VT8) (Marinobacter aquaeolei) protein is tRNA dimethylallyltransferase.